A 291-amino-acid polypeptide reads, in one-letter code: U7 snRNA-associated Sm-like protein LSm11 (291 aa).

The segment at 55–84 is disordered; it reads ARGRARGAQRGQSRGPGGKRKGRKPEPDPE. The Sm domain maps to 124-199; sequence SPLGELNRCV…LTLTRLFDRL (76 aa). Positions 155-289 are SM; the sequence is GFIVAFDKFW…RGENVLLVHI (135 aa). A disordered region spans residues 203 to 266; it reads EPGSHDPAKG…RRNRKEKVDY (64 aa). Residues 251-261 show a composition bias toward basic residues; it reads NRPKQRRRNRK.

The protein belongs to the snRNP Sm proteins family. In terms of assembly, component of the heptameric ring U7 snRNP complex.

It is found in the nucleus. Functionally, component of the U7 snRNP complex that is involved in the histone 3'-end pre-mRNA processing. Increases U7 snRNA levels but not histone 3'-end pre-mRNA processing activity, when overexpressed. Binds specifically to the Sm-binding site of U7 snRNA. In Xenopus laevis (African clawed frog), this protein is U7 snRNA-associated Sm-like protein LSm11.